The following is a 1394-amino-acid chain: DNA-directed RNA polymerase subunit beta' (1394 aa).

Positions 71, 73, 86, and 89 each coordinate Zn(2+). Mg(2+) is bound by residues aspartate 462, aspartate 464, and aspartate 466. 4 residues coordinate Zn(2+): cysteine 810, cysteine 883, cysteine 890, and cysteine 893.

The protein belongs to the RNA polymerase beta' chain family. The RNAP catalytic core consists of 2 alpha, 1 beta, 1 beta' and 1 omega subunit. When a sigma factor is associated with the core the holoenzyme is formed, which can initiate transcription. The cofactor is Mg(2+). It depends on Zn(2+) as a cofactor.

The enzyme catalyses RNA(n) + a ribonucleoside 5'-triphosphate = RNA(n+1) + diphosphate. Functionally, DNA-dependent RNA polymerase catalyzes the transcription of DNA into RNA using the four ribonucleoside triphosphates as substrates. The chain is DNA-directed RNA polymerase subunit beta' from Beijerinckia indica subsp. indica (strain ATCC 9039 / DSM 1715 / NCIMB 8712).